A 245-amino-acid chain; its full sequence is Probable septum site-determining protein MinC (245 aa).

Over residues 112–132 the composition is skewed to basic and acidic residues; sequence ARERPLESAEPVAPKKPEKPP. The segment at 112–140 is disordered; it reads ARERPLESAEPVAPKKPEKPPEPTVKPTR.

This sequence belongs to the MinC family. As to quaternary structure, interacts with MinD and FtsZ.

Its function is as follows. Cell division inhibitor that blocks the formation of polar Z ring septums. Rapidly oscillates between the poles of the cell to destabilize FtsZ filaments that have formed before they mature into polar Z rings. Prevents FtsZ polymerization. This is Probable septum site-determining protein MinC from Pseudomonas fluorescens (strain Pf0-1).